The chain runs to 707 residues: Lipase maturation factor 2 (707 aa).

A run of 10 helical transmembrane segments spans residues 10–30 (AFLWGLSGIYLFAFVSLYVQI), 78–98 (MELICLLGALLSLGALLFSCL), 102–122 (LVFLLLWVFYLSLYQVGQVFL), 126–146 (WDSLLLETGFLAILVAPLHAM), 158–178 (GVTFWLTRWLLFRLMFASGVV), 220–240 (FSVVATFFIEIGVPWLFFLPF), 256–276 (ILIIITGNYNFFNLLTIVLCC), 309–329 (LVSLLEIPIFGLLVFWTVKYF), 358–378 (ITFPSIWIAAASLGWEILKGM), and 395–415 (LQWLMFSCAAAAMFTISLVPY). Asparagine 483 carries N-linked (GlcNAc...) asparagine glycosylation. Residues 634 to 654 (LLLHSFIFGIFTIYFLQAMFG) traverse the membrane as a helical segment. Positions 661–707 (VAKQRHSMPPNEKKKQKPNSGQGESASSKSSGHGTDTVRRNKKNEKS) are disordered. Low complexity predominate over residues 680 to 694 (SGQGESASSKSSGHG). A compositionally biased stretch (basic and acidic residues) spans 696–707 (DTVRRNKKNEKS).

This sequence belongs to the lipase maturation factor family.

It localises to the endoplasmic reticulum membrane. Functionally, involved in the maturation of specific proteins in the endoplasmic reticulum. The sequence is that of Lipase maturation factor 2 (lmf2) from Xenopus laevis (African clawed frog).